Reading from the N-terminus, the 261-residue chain is Undecaprenyl-diphosphatase (261 aa).

8 helical membrane-spanning segments follow: residues 1–21 (MTVL…FLPI), 40–60 (GLTF…AYFW), 79–99 (GRLF…GVLF), 106–126 (IFRS…GLWW), 140–160 (VNLF…IPGV), 185–205 (FLMS…ELPL), 210–230 (LAFI…IKFL), and 239–259 (YLLF…VFWL).

Belongs to the UppP family.

The protein localises to the cell membrane. The enzyme catalyses di-trans,octa-cis-undecaprenyl diphosphate + H2O = di-trans,octa-cis-undecaprenyl phosphate + phosphate + H(+). Functionally, catalyzes the dephosphorylation of undecaprenyl diphosphate (UPP). Confers resistance to bacitracin. The polypeptide is Undecaprenyl-diphosphatase (Moorella thermoacetica (strain ATCC 39073 / JCM 9320)).